A 286-amino-acid chain; its full sequence is Phycobilisome 32.1 kDa linker polypeptide, phycocyanin-associated, rod (286 aa).

Residues Ala2 to Arg180 form the PBS-linker domain. The CpcD-like domain maps to Asp234–Ala286.

This sequence belongs to the phycobilisome linker protein family.

It localises to the cellular thylakoid membrane. Functionally, rod linker protein, associated with phycocyanin. Linker polypeptides determine the state of aggregation and the location of the disk-shaped phycobiliprotein units within the phycobilisome and modulate their spectroscopic properties in order to mediate a directed and optimal energy transfer. In Mastigocladus laminosus (Fischerella sp.), this protein is Phycobilisome 32.1 kDa linker polypeptide, phycocyanin-associated, rod (cpcC).